The following is a 433-amino-acid chain: MSDVLFIEGGRVIDPASGVDGVRTVVIRDGKVAEVAERVERPRDARAVDARNRWVTPGFVDLHVHLREPGQEYKETVATGARAAVAGGFTAVCAMPNTKPVNDCAAVTELVLARAAAAGLARVYPVGAISRGSNGEELAEYGELKASGCVALSDDGRPVMSSALMRRALEYARAFGLPLTVHEEDLHLVGKGVMHEGAAATRLGLKGIPSQAEDVMVLRDIALVELTGGRLHVAHVSTAGAVRAIREAKRRGLPVTGEVTPHHLALTDDDVGASGYSTDFKMNPPLRSAEDVRACREALADGTLDAIATDHAPHSAVEKDVEFDAAANGIVGLETAFSVCLGLVREGALTERRLVEALTVGPARVFGLPAGTLARGAAADVAVLDAAAEWTVDPARLHSKGRNTPWKGRRLAGRCTHTIVGGRIVHEEDKADR.

Zn(2+)-binding residues include histidine 63 and histidine 65. Substrate is bound by residues 65–67 (HLR) and asparagine 97. Residues aspartate 155, histidine 182, and histidine 235 each coordinate Zn(2+). Position 283 (asparagine 283) interacts with substrate. Aspartate 310 is a binding site for Zn(2+). Aspartate 310 is an active-site residue. Residue histidine 314 participates in substrate binding.

This sequence belongs to the metallo-dependent hydrolases superfamily. DHOase family. Class I DHOase subfamily. The cofactor is Zn(2+).

The enzyme catalyses (S)-dihydroorotate + H2O = N-carbamoyl-L-aspartate + H(+). Its pathway is pyrimidine metabolism; UMP biosynthesis via de novo pathway; (S)-dihydroorotate from bicarbonate: step 3/3. Catalyzes the reversible cyclization of carbamoyl aspartate to dihydroorotate. This Anaeromyxobacter dehalogenans (strain 2CP-1 / ATCC BAA-258) protein is Dihydroorotase.